The sequence spans 181 residues: Adenylyl-sulfate kinase (181 aa).

ATP is bound at residue 12-19 (GLSGAGKS). The active-site Phosphoserine intermediate is the Ser-86.

The protein belongs to the APS kinase family.

The enzyme catalyses adenosine 5'-phosphosulfate + ATP = 3'-phosphoadenylyl sulfate + ADP + H(+). Its pathway is sulfur metabolism; hydrogen sulfide biosynthesis; sulfite from sulfate: step 2/3. In terms of biological role, catalyzes the synthesis of activated sulfate. This Microcystis aeruginosa (strain NIES-843 / IAM M-2473) protein is Adenylyl-sulfate kinase.